Consider the following 284-residue polypeptide: Tegument protein UL23 (284 aa).

The protein belongs to the herpesviridae US22 family. As to quaternary structure, interacts with host NMI; this interaction inhibits NMI interaction with STAT1.

The protein resides in the virion tegument. Its subcellular location is the host cytoplasm. Its function is as follows. Plays a role in the inhibition of host innate immune response by disrupting the interaction between NMI and STAT1. In turn, NMI-mediated transcription of interferon-gamma stimulated genes is inhibited. This Homo sapiens (Human) protein is Tegument protein UL23 (UL23).